Here is a 345-residue protein sequence, read N- to C-terminus: Ribonucleoside-diphosphate reductase small chain 2 (345 aa).

M1 is modified (N-acetylmethionine). Residue Y131 is part of the active site. Residues S169 and S332 each carry the phosphoserine modification. T334 bears the Phosphothreonine mark. S336 carries the post-translational modification Phosphoserine. K337 is covalently cross-linked (Glycyl lysine isopeptide (Lys-Gly) (interchain with G-Cter in ubiquitin)).

The protein belongs to the ribonucleoside diphosphate reductase small chain family. In terms of assembly, heterotetramer of two large (R1) and two small (R2) subunits. S.cerevisiae has two different R1 subunits (RNR1 and RNR3) and two different R2 subunits (RNR2 and RNR4). The functional form of the small subunits is a RNR2-RNR4 heterodimer, where RNR2 provides the iron-radical center and RNR4 is required for proper folding of RNR2 and assembly with the large subunits. Under normal growth conditions, the active form of the large subunits is a homodimer of the constitutively expressed RNR1. In damaged cells or cells arrested for DNA synthesis, the reductase consists of multiple species because of the association of the small subunits (RNR2-RNR4) with either the RNR1 homodimer or a heterodimer of RNR1 and the damage-inducible RNR3. Interacts with DIF1.

Its subcellular location is the nucleus. The enzyme catalyses a 2'-deoxyribonucleoside 5'-diphosphate + [thioredoxin]-disulfide + H2O = a ribonucleoside 5'-diphosphate + [thioredoxin]-dithiol. Functionally, provides the precursors necessary for DNA synthesis. Catalyzes the biosynthesis of deoxyribonucleotides from the corresponding ribonucleotides. RNR4 is required for proper folding of RNR2 and assembly with the large subunits. In Saccharomyces cerevisiae (strain ATCC 204508 / S288c) (Baker's yeast), this protein is Ribonucleoside-diphosphate reductase small chain 2 (RNR4).